The sequence spans 88 residues: Small ribosomal subunit protein bS20 (88 aa).

The segment at 1-27 is disordered; that stretch reads MANSKSAKKRALQSEKRRQHNASRRSM.

The protein belongs to the bacterial ribosomal protein bS20 family.

In terms of biological role, binds directly to 16S ribosomal RNA. This is Small ribosomal subunit protein bS20 from Shewanella sp. (strain ANA-3).